A 398-amino-acid chain; its full sequence is FK506-binding protein 4 (398 aa).

Disordered regions lie at residues 66–120, 164–232, and 245–288; these read EVDE…DEYE, VKHP…QLAK, and DLIA…KKNK. Over residues 170-228 the composition is skewed to acidic residues; that stretch reads EPLEDLYSDEDSEEYSDDELDQEIEEDDELDHDEASSEESDEDQEFYDAISEGDEDIDE. Residues 264–287 are compositionally biased toward basic and acidic residues; the sequence is PETKKSKKTKDEKNTKATENEKKN. One can recognise a PPIase FKBP-type domain in the interval 312-398; that stretch reads GSKVGMRYIG…TFDVKLVSLK (87 aa).

Belongs to the FKBP-type PPIase family. FKBP3/4 subfamily. In terms of assembly, binds to histones H3 and H4.

It localises to the nucleus. The catalysed reaction is [protein]-peptidylproline (omega=180) = [protein]-peptidylproline (omega=0). Inhibited by both FK506 and rapamycin. Its function is as follows. PPIase that acts as a histone chaperone. Histone proline isomerase that increases the rate of cis-trans isomerization at prolines on the histone H3 N-terminal tail. Proline isomerization influences H3 methylation thereby regulating gene expression. This chain is FK506-binding protein 4 (FPR4), found in Candida glabrata (strain ATCC 2001 / BCRC 20586 / JCM 3761 / NBRC 0622 / NRRL Y-65 / CBS 138) (Yeast).